Consider the following 388-residue polypeptide: Succinate--CoA ligase [ADP-forming] subunit beta (388 aa).

An ATP-grasp domain is found at 9–244 (KSLFAEYGLP…PSQDDAREAH (236 aa)). ATP contacts are provided by residues Lys-46, 53 to 55 (GRG), Glu-99, Thr-102, and Glu-107. 2 residues coordinate Mg(2+): Asn-199 and Asp-213. Residues Asn-264 and 321–323 (GIV) each bind substrate.

This sequence belongs to the succinate/malate CoA ligase beta subunit family. In terms of assembly, heterotetramer of two alpha and two beta subunits. Mg(2+) serves as cofactor.

It catalyses the reaction succinate + ATP + CoA = succinyl-CoA + ADP + phosphate. The catalysed reaction is GTP + succinate + CoA = succinyl-CoA + GDP + phosphate. The protein operates within carbohydrate metabolism; tricarboxylic acid cycle; succinate from succinyl-CoA (ligase route): step 1/1. Functionally, succinyl-CoA synthetase functions in the citric acid cycle (TCA), coupling the hydrolysis of succinyl-CoA to the synthesis of either ATP or GTP and thus represents the only step of substrate-level phosphorylation in the TCA. The beta subunit provides nucleotide specificity of the enzyme and binds the substrate succinate, while the binding sites for coenzyme A and phosphate are found in the alpha subunit. The protein is Succinate--CoA ligase [ADP-forming] subunit beta of Shewanella sp. (strain MR-4).